Reading from the N-terminus, the 254-residue chain is uncharacterized protein (254 aa).

Belongs to the methyltransferase superfamily.

This is an uncharacterized protein from Mycobacterium tuberculosis (strain ATCC 25177 / H37Ra).